Consider the following 218-residue polypeptide: UPF0502 protein CJA_1529 (218 aa).

Belongs to the UPF0502 family.

This Cellvibrio japonicus (strain Ueda107) (Pseudomonas fluorescens subsp. cellulosa) protein is UPF0502 protein CJA_1529.